The sequence spans 489 residues: MIPPHEFSAERVVFDALGVALSALPDDTPIAIAYSGGLDSTVLLHAAARIAGAGRCIALHVHHGLSANADAWLAHCAETAQALGARFDAARVDVPRASGQGIEASARDARYRALETMCARYGARTLWLAQHADDQAETVLLQLLRGAGIAGLAAMAPQYRPALADVVRMRPLLHLLRAQLERYAQQHALRWIDDESNTDTRYARNALRVDVLPALAPHFPGFRDALARTAQHAAAAQRLLDDLAAIDLRAVARADVRVLSRDALVALDDERGANLLRYWMRSLGLPGASAARLAEMVKQLRAARDAHALRVDHAGWRLRLYRDDVQWEAGDGAASEAARADVADDDAADARDDRADASAAARLPACALAWRGHEVWRLPGWRGSFVFSPVAAHEHDAVPEALLSSAALRACARAGGERMRTRQGGPGRTLKNLFQERGVPAWQRDVPLLYVGERLLFVPRIGVNRATHDGADAPGGWRRIEWRPDMLIA.

35-40 (SGGLDS) contacts ATP.

Belongs to the tRNA(Ile)-lysidine synthase family.

It localises to the cytoplasm. The catalysed reaction is cytidine(34) in tRNA(Ile2) + L-lysine + ATP = lysidine(34) in tRNA(Ile2) + AMP + diphosphate + H(+). Functionally, ligates lysine onto the cytidine present at position 34 of the AUA codon-specific tRNA(Ile) that contains the anticodon CAU, in an ATP-dependent manner. Cytidine is converted to lysidine, thus changing the amino acid specificity of the tRNA from methionine to isoleucine. This is tRNA(Ile)-lysidine synthase from Burkholderia pseudomallei (strain K96243).